Reading from the N-terminus, the 319-residue chain is Beta-ketoacyl-[acyl-carrier-protein] synthase III (319 aa).

Residues Cys-115 and His-246 contribute to the active site. The ACP-binding stretch occupies residues 247–251 (QANLR). Asn-276 is a catalytic residue.

It belongs to the thiolase-like superfamily. FabH family. As to quaternary structure, homodimer.

The protein resides in the cytoplasm. It carries out the reaction malonyl-[ACP] + acetyl-CoA + H(+) = 3-oxobutanoyl-[ACP] + CO2 + CoA. Its pathway is lipid metabolism; fatty acid biosynthesis. Its function is as follows. Catalyzes the condensation reaction of fatty acid synthesis by the addition to an acyl acceptor of two carbons from malonyl-ACP. Catalyzes the first condensation reaction which initiates fatty acid synthesis and may therefore play a role in governing the total rate of fatty acid production. Possesses both acetoacetyl-ACP synthase and acetyl transacylase activities. Its substrate specificity determines the biosynthesis of branched-chain and/or straight-chain of fatty acids. The protein is Beta-ketoacyl-[acyl-carrier-protein] synthase III of Coxiella burnetii (strain RSA 493 / Nine Mile phase I).